A 421-amino-acid chain; its full sequence is Testin (421 aa).

The PET domain occupies 92–199 (MILTNPVAAK…GDVKLPCEMD (108 aa)). The disordered stretch occupies residues 133–164 (EKQPVAGSEGAQYRKKQLAKQLPAHDQDPSKC). Basic and acidic residues predominate over residues 155–164 (PAHDQDPSKC). 3 consecutive LIM zinc-binding domains span residues 234 to 297 (YSCY…CDSE), 299 to 359 (PRCA…NHAV), and 362 to 421 (QGCH…KMMS).

The protein belongs to the prickle / espinas / testin family. Interacts via LIM domain 1 with ZYX. Interacts (via LIM domain 3) with ENAH and VASP. Interacts with ALKBH4, talin, actin, alpha-actinin, GRIP1 and PXN. Interacts (via LIM domain 2) with ACTL7A (via N-terminus). Heterodimer with ACTL7A; the heterodimer interacts with ENAH to form a heterotrimer.

The protein localises to the cytoplasm. It is found in the cell junction. It localises to the focal adhesion. In terms of biological role, scaffold protein that may play a role in cell adhesion, cell spreading and in the reorganization of the actin cytoskeleton. Plays a role in the regulation of cell proliferation. May act as a tumor suppressor. The sequence is that of Testin (TES) from Callithrix jacchus (White-tufted-ear marmoset).